Reading from the N-terminus, the 33-residue chain is Dolabellanin-B2 (33 aa).

Contains two disulfide bonds. Post-translationally, up to two of the methionines may be oxidized to methionine sulfoxides.

The protein localises to the secreted. In terms of biological role, has antibacterial activity against Gram-negative bacteria E.coli JM109 and DH5-alpha, H.influenza IID 983, and V.vulnificus RIMD 2219009. Has antibacterial activity against Gram-positive bacteria S.aureus IID 1677, B.subtilis RIMD 0225014 and L.monocytogenes VIU206. Possesses antifungal activity against S.cerevisiae A581A, S.pombe IFO 1628, C.albicans ATCC 36232 and TIMM-1623, and C.tropicalis TIMM-0313. This chain is Dolabellanin-B2, found in Dolabella auricularia (Shoulderblade sea cat).